The primary structure comprises 188 residues: Protein GrpE (188 aa).

The tract at residues 1–22 is disordered; that stretch reads MADEQTLDTQNLDANQAPEASG.

Belongs to the GrpE family. As to quaternary structure, homodimer.

The protein localises to the cytoplasm. Participates actively in the response to hyperosmotic and heat shock by preventing the aggregation of stress-denatured proteins, in association with DnaK and GrpE. It is the nucleotide exchange factor for DnaK and may function as a thermosensor. Unfolded proteins bind initially to DnaJ; upon interaction with the DnaJ-bound protein, DnaK hydrolyzes its bound ATP, resulting in the formation of a stable complex. GrpE releases ADP from DnaK; ATP binding to DnaK triggers the release of the substrate protein, thus completing the reaction cycle. Several rounds of ATP-dependent interactions between DnaJ, DnaK and GrpE are required for fully efficient folding. The chain is Protein GrpE from Pseudomonas fluorescens (strain ATCC BAA-477 / NRRL B-23932 / Pf-5).